Here is a 476-residue protein sequence, read N- to C-terminus: Aspartyl/glutamyl-tRNA(Asn/Gln) amidotransferase subunit B (476 aa).

The protein belongs to the GatB/GatE family. GatB subfamily. As to quaternary structure, heterotrimer of A, B and C subunits.

The enzyme catalyses L-glutamyl-tRNA(Gln) + L-glutamine + ATP + H2O = L-glutaminyl-tRNA(Gln) + L-glutamate + ADP + phosphate + H(+). It catalyses the reaction L-aspartyl-tRNA(Asn) + L-glutamine + ATP + H2O = L-asparaginyl-tRNA(Asn) + L-glutamate + ADP + phosphate + 2 H(+). Allows the formation of correctly charged Asn-tRNA(Asn) or Gln-tRNA(Gln) through the transamidation of misacylated Asp-tRNA(Asn) or Glu-tRNA(Gln) in organisms which lack either or both of asparaginyl-tRNA or glutaminyl-tRNA synthetases. The reaction takes place in the presence of glutamine and ATP through an activated phospho-Asp-tRNA(Asn) or phospho-Glu-tRNA(Gln). This chain is Aspartyl/glutamyl-tRNA(Asn/Gln) amidotransferase subunit B, found in Lactobacillus johnsonii (strain CNCM I-12250 / La1 / NCC 533).